A 103-amino-acid polypeptide reads, in one-letter code: MKYDGDGRATARFFSDKGCRRAPLFTAPADAARHKRCLWSVSRVRRARDGRFYRSRLVSVTVYASPSPFSDERPSSRFRGITLLSKRRRLRYSTVGLTRYRKR.

This is an uncharacterized protein from Shigella flexneri.